The chain runs to 481 residues: WASH complex subunit 1 (481 aa).

Positions 1–54 (MVRMTQKRYLEGQVYSVPLIQPDLRREEAVHQITDALQYLEMISTDIFTRVSES) are required for WASH complex assembly. Disordered regions lie at residues 273-417 (SVPA…SGGD) and 429-481 (RRKG…DWEA). The span at 304-341 (APPPPPPPPPPPPEPTHVPVPPPGTSAAPPPPPPPPPM) shows a compositional bias: pro residues. Positions 359–481 (KGAPSEVVQP…AADDEDDWEA (123 aa)) are VCA. A WH2 domain is found at 371-393 (GRASLLESIRNAGGIGKANLRNV). A compositionally biased stretch (basic and acidic residues) spans 392–407 (NVKERKMEKKKQKEQE).

This sequence belongs to the WASH1 family. In terms of assembly, component of the WASH complex.

The protein localises to the early endosome membrane. It is found in the recycling endosome membrane. Functionally, acts as a nucleation-promoting factor at the surface of endosomes, where it recruits and activates the Arp2/3 complex to induce actin polymerization, playing a key role in the fission of tubules that serve as transport intermediates during endosome sorting. This chain is WASH complex subunit 1, found in Danio rerio (Zebrafish).